The sequence spans 138 residues: Small ribosomal subunit protein uS11c (138 aa).

Positions 1–24 (MAKSPPRSGSRRPGRIGSRKSGRR) are disordered. A compositionally biased stretch (basic residues) spans 9–24 (GSRRPGRIGSRKSGRR).

It belongs to the universal ribosomal protein uS11 family. In terms of assembly, part of the 30S ribosomal subunit.

The protein resides in the plastid. The protein localises to the chloroplast. In Citrus sinensis (Sweet orange), this protein is Small ribosomal subunit protein uS11c.